The sequence spans 104 residues: Enhancer of rudimentary homolog 1 (104 aa).

It belongs to the E(R) family. In terms of assembly, homodimer. Component of the erh1-mmi1 complex. Interacts with mmi1 (via N-terminus) in a 2:2 stoichiometry.

The protein resides in the nucleus. It localises to the cytoplasm. Functionally, forms part of the erh1-mmi1 complex that recruits the CCR4-NOT complex and the NURS complex to target RNAs. Suppresses the meiotic program during vegetative growth and promotes the meiotic program during mating. Recruitment of the NURS complex to target mRNAs promotes mRNA decay by engagement of the nuclear exosome, and formation of heterochromatin islands at meiotic genes silenced by the exosome. Recruitment of the CCR4-NOT complex to target RNAs promotes heterochromatin formation at RNAi-dependent heterochromatin domains (HOODs), including a subset of meiotic genes, lncRNAs and retrotransposons. Recruitment of the CCR4-NOT complex to rDNA promotes rDNA heterochromatin assembly. In Schizosaccharomyces pombe (strain 972 / ATCC 24843) (Fission yeast), this protein is Enhancer of rudimentary homolog 1.